Consider the following 1948-residue polypeptide: [F-actin]-monooxygenase MICAL2 (1948 aa).

A monooxygenase domain region spans residues 2 to 494; the sequence is GENEDEKQAQ…KHLYITKEMD (493 aa). FAD is bound by residues Cys97, 116–118, 123–125, Phe183, Tyr298, and Asp398; these read EKR and RNN. The region spanning 516-619 is the Calponin-homology (CH) domain; the sequence is DIRPNKLLTW…MVMYLSKFYE (104 aa). The residue at position 631 (Ser631) is a Phosphoserine. Positions 660-681 match the Nuclear localization signal motif; that stretch reads RKRTPRVDAQTEENDVNKRRRQ. Disordered stretches follow at residues 664–709, 753–776, and 891–923; these read PRVD…ESGN, SRPPGTSHCPKLEESTPRLPPPLK, and KRVPHAHPPSPPSCLPSPDPAAAPSPPAADSVS. The span at 693 to 709 shows a compositional bias: polar residues; that stretch reads SSRSLGSSQEYAKESGN. A compositionally biased stretch (pro residues) spans 896-917; sequence AHPPSPPSCLPSPDPAAAPSPP. The 63-residue stretch at 980–1042 folds into the LIM zinc-binding domain; that stretch reads DTCYFCKKRV…KLHFAHCKTS (63 aa). The Zn(2+) site is built by Cys982, Cys985, His1003, Cys1006, Cys1009, Cys1012, Cys1032, and His1035. Disordered regions lie at residues 1045–1134, 1146–1185, and 1233–1298; these read QRKR…GQDG, SEDSSSDTESDSGSIIGPCTEACEERPRLPESPPLSQPLT, and QSNS…DDVS. Residues 1050 to 1059 show a composition bias toward basic and acidic residues; sequence AELNQQREEE. The segment covering 1233–1243 has biased composition (polar residues); that stretch reads QSNSTPMNQRA. Positions 1254-1271 are enriched in low complexity; that stretch reads SSSSSPSLPSSFSSASVP. A compositionally biased stretch (polar residues) spans 1277-1292; that stretch reads DSSSPQVTYNLHSPQI. The tract at residues 1300-1339 is interaction with MAPK1; it reads TPIYLRRARAQGITKEIPLYLPHSPMLESTEHCLVSPDGE. 4 disordered regions span residues 1478–1505, 1519–1622, 1672–1726, and 1739–1767; these read QKKALGETRTPAAKAPREREVPPPKSPL, SSEA…SSKV, GDFF…QAGK, and SGPGAPVTEDTSSPTSSSAEEDVETQLSS. Residues 1522–1534 are compositionally biased toward basic and acidic residues; the sequence is AGKKTSSKPETKT. Over residues 1570 to 1579 the composition is skewed to low complexity; sequence KASAFFSLAS. A compositionally biased stretch (polar residues) spans 1580-1591; sequence PTSKAAQASDLS. Residues 1672–1682 show a composition bias toward basic and acidic residues; sequence GDFFNSPKEKG. At Ser1677 the chain carries Phosphoserine. 2 stretches are compositionally biased toward polar residues: residues 1698–1715 and 1747–1756; these read VDSTSMGQVAHPSSTGQD and EDTSSPTSSS. Residues 1786-1936 enclose the bMERB domain; it reads KQEELKRLHK…ERTQDQHFEN (151 aa).

Belongs to the Mical family. In terms of assembly, interacts with PLXNA4. Interacts with RAB1B. Interacts with MAPK1/ERK2. Interacts with RAB35, RAB8A, RAB10, RAB13 and RAB15 (in their GTP-bound forms); binding to RAB35 is of low affinity compared to other Rab proteins; at least in case of RAB8A may bind 2 molecules of RAB8A simultaneously through a high and a low affinity binding site, respectively. May interact with MAPK1/ERK2. FAD serves as cofactor.

It localises to the nucleus. It is found in the cytoplasm. The enzyme catalyses L-methionyl-[F-actin] + NADPH + O2 + H(+) = L-methionyl-(R)-S-oxide-[F-actin] + NADP(+) + H2O. In terms of biological role, methionine monooxygenase that promotes depolymerization of F-actin by mediating oxidation of residues 'Met-44' and 'Met-47' on actin to form methionine-sulfoxide, resulting in actin filament disassembly and preventing repolymerization. Regulates the disassembly of branched actin networks also by oxidizing ARP3B-containing ARP2/3 complexes leading to ARP3B dissociation from the network. Acts as a key regulator of the SRF signaling pathway elicited by nerve growth factor and serum: mediates oxidation and subsequent depolymerization of nuclear actin, leading to increase MKL1/MRTF-A presence in the nucleus and promote SRF:MKL1/MRTF-A-dependent gene transcription. Does not activate SRF:MKL1/MRTF-A through RhoA. The sequence is that of [F-actin]-monooxygenase MICAL2 from Rattus norvegicus (Rat).